The chain runs to 294 residues: MSDYLVKALAYDGMARVYAAVTTETIKEAQRRHDTWSVSSAALGRTMTGTLFLGAMQKEDQKITVKIEGDGPIGPIVADSNAQGQIRGYVTNPHVHFSELNEAGKLDVRRGVGTSGMLSVVKDLGFGENFTGQTPIVSGEIGEDFTYYLATSEQINSSVGVGVLVNPDDTIEAAGGFMLQLLPGATDEIIDEIEKNLSTLPTVSRMIEAGETPETILAKLAGGEDKLQILEKIPVAFECNCSKERFGSAIISLGKEEIRSMIEEDHGAEAECHFCRNTYDFSEEELEKLYEEAK.

2 disulfides stabilise this stretch: C239-C241 and C272-C275.

This sequence belongs to the HSP33 family. Under oxidizing conditions two disulfide bonds are formed involving the reactive cysteines. Under reducing conditions zinc is bound to the reactive cysteines and the protein is inactive.

The protein resides in the cytoplasm. Functionally, redox regulated molecular chaperone. Protects both thermally unfolding and oxidatively damaged proteins from irreversible aggregation. Plays an important role in the bacterial defense system toward oxidative stress. The polypeptide is 33 kDa chaperonin (Listeria innocua serovar 6a (strain ATCC BAA-680 / CLIP 11262)).